Consider the following 180-residue polypeptide: Oligoribonuclease (180 aa).

The region spanning 7 to 170 (LIWIDLEMTG…SDIQDSIDEL (164 aa)) is the Exonuclease domain. Tyr-128 is an active-site residue.

Belongs to the oligoribonuclease family.

The protein localises to the cytoplasm. Functionally, 3'-to-5' exoribonuclease specific for small oligoribonucleotides. The protein is Oligoribonuclease of Ruthia magnifica subsp. Calyptogena magnifica.